The following is an 874-amino-acid chain: Chaperone protein ClpB 1 (874 aa).

The Clp R domain occupies 6 to 148; that stretch reads PNQFTEKAWE…RQIIQQIRGS (143 aa). Repeat regions lie at residues 9-73 and 85-148; these read FTEK…IARQ and LGRS…IRGS. The segment at 161–342 is NBD1; it reads EALEKYGRDL…RRFQQVFVDQ (182 aa). Position 208-215 (208-215) interacts with ATP; it reads GEPGVGKT. Positions 343–551 are linker; that stretch reads PTVEDTISIL…IAEIISKWTG (209 aa). Residues 393-527 are a coiled coil; that stretch reads IDLVDESAAR…MEGGLATTHT (135 aa). Residues 561–772 are NBD2; sequence EMQKLLNLDE…RVDETIIFHS (212 aa). ATP is bound at residue 611–618; the sequence is GPTGVGKT. The interval 773–874 is C-terminal; sequence LRKDQLQQIV…IATPTAVPLS (102 aa).

Belongs to the ClpA/ClpB family. As to quaternary structure, homohexamer. The oligomerization is ATP-dependent.

The protein resides in the cytoplasm. Part of a stress-induced multi-chaperone system, it is involved in the recovery of the cell from heat-induced damage, in cooperation with DnaK, DnaJ and GrpE. Acts before DnaK, in the processing of protein aggregates. Protein binding stimulates the ATPase activity; ATP hydrolysis unfolds the denatured protein aggregates, which probably helps expose new hydrophobic binding sites on the surface of ClpB-bound aggregates, contributing to the solubilization and refolding of denatured protein aggregates by DnaK. Necessary for thermotolerance. This Synechococcus elongatus (strain ATCC 33912 / PCC 7942 / FACHB-805) (Anacystis nidulans R2) protein is Chaperone protein ClpB 1 (clpB1).